A 162-amino-acid chain; its full sequence is Glutathione peroxidase-like peroxiredoxin GPX5 (162 aa).

An S-selanylcysteine modification is found at Cys38. Asn87 is an active-site residue.

Belongs to the glutathione peroxidase family. Cys-87 is S-selanylated when selenium levels are high. S-selanylation may increase or be important for glutathione peroxidase activity.

It is found in the cytoplasm. The catalysed reaction is 2 glutathione + H2O2 = glutathione disulfide + 2 H2O. It carries out the reaction a hydroperoxide + [thioredoxin]-dithiol = an alcohol + [thioredoxin]-disulfide + H2O. Has thioredoxin peroxidase activity. May also have glutathione peroxidase activity, although this activity is controversial. Protects cells against reactive oxygen species, which may include photooxidative stress, hydrogen peroxide and organic hydroperoxides. The chain is Glutathione peroxidase-like peroxiredoxin GPX5 from Chlamydomonas reinhardtii (Chlamydomonas smithii).